The following is a 96-amino-acid chain: Large ribosomal subunit protein bL21 (96 aa).

Residues 73–84 (KRRKRYQSRNGH) are compositionally biased toward basic residues. The tract at residues 73–96 (KRRKRYQSRNGHRQQMTQIEVVSL) is disordered. Residues 85 to 96 (RQQMTQIEVVSL) show a composition bias toward polar residues.

The protein belongs to the bacterial ribosomal protein bL21 family. As to quaternary structure, part of the 50S ribosomal subunit. Contacts protein L20.

Its function is as follows. This protein binds to 23S rRNA in the presence of protein L20. The protein is Large ribosomal subunit protein bL21 of Chlorobium phaeovibrioides (strain DSM 265 / 1930) (Prosthecochloris vibrioformis (strain DSM 265)).